The sequence spans 202 residues: Small ribosomal subunit protein uS4 (202 aa).

The interval 22–43 is disordered; the sequence is TRKSARRAYPPGQHGQNRKKRS. The S4 RNA-binding domain maps to 90 to 152; that stretch reads MRLDNTVFRL…APSRKLVENN (63 aa).

The protein belongs to the universal ribosomal protein uS4 family. As to quaternary structure, part of the 30S ribosomal subunit. Contacts protein S5. The interaction surface between S4 and S5 is involved in control of translational fidelity.

Functionally, one of the primary rRNA binding proteins, it binds directly to 16S rRNA where it nucleates assembly of the body of the 30S subunit. With S5 and S12 plays an important role in translational accuracy. In Nostoc sp. (strain PCC 7120 / SAG 25.82 / UTEX 2576), this protein is Small ribosomal subunit protein uS4.